The sequence spans 538 residues: Chaperonin GroEL (538 aa).

ATP-binding positions include 29-32 (TLGP), 86-90 (DGTTT), Gly413, 479-481 (DAL), and Asp495.

The protein belongs to the chaperonin (HSP60) family. Forms a cylinder of 14 subunits composed of two heptameric rings stacked back-to-back. Interacts with the co-chaperonin GroES.

Its subcellular location is the cytoplasm. The enzyme catalyses ATP + H2O + a folded polypeptide = ADP + phosphate + an unfolded polypeptide.. Functionally, together with its co-chaperonin GroES, plays an essential role in assisting protein folding. The GroEL-GroES system forms a nano-cage that allows encapsulation of the non-native substrate proteins and provides a physical environment optimized to promote and accelerate protein folding. This chain is Chaperonin GroEL, found in Thermotoga petrophila (strain ATCC BAA-488 / DSM 13995 / JCM 10881 / RKU-1).